The following is a 289-amino-acid chain: Release factor glutamine methyltransferase (289 aa).

S-adenosyl-L-methionine contacts are provided by residues 122–126 (GVGSG), Asp-145, Trp-174, and Asn-189. Residue 189–192 (NPPY) participates in substrate binding.

It belongs to the protein N5-glutamine methyltransferase family. PrmC subfamily.

The enzyme catalyses L-glutaminyl-[peptide chain release factor] + S-adenosyl-L-methionine = N(5)-methyl-L-glutaminyl-[peptide chain release factor] + S-adenosyl-L-homocysteine + H(+). Methylates the class 1 translation termination release factors RF1/PrfA and RF2/PrfB on the glutamine residue of the universally conserved GGQ motif. The chain is Release factor glutamine methyltransferase from Caulobacter vibrioides (strain ATCC 19089 / CIP 103742 / CB 15) (Caulobacter crescentus).